The sequence spans 75 residues: Sec-independent protein translocase protein TatA (75 aa).

The helical transmembrane segment at 1–21 (MGGFSIWHWLIVLVIVLLVFG) threads the bilayer. The tract at residues 41–75 (KGMHDDDKPAGKLGDDSRTAEQAREAQAERDRDAR) is disordered.

This sequence belongs to the TatA/E family. The Tat system comprises two distinct complexes: a TatABC complex, containing multiple copies of TatA, TatB and TatC subunits, and a separate TatA complex, containing only TatA subunits. Substrates initially bind to the TatABC complex, which probably triggers association of the separate TatA complex to form the active translocon.

It localises to the cell inner membrane. Part of the twin-arginine translocation (Tat) system that transports large folded proteins containing a characteristic twin-arginine motif in their signal peptide across membranes. TatA could form the protein-conducting channel of the Tat system. In Xanthomonas axonopodis pv. citri (strain 306), this protein is Sec-independent protein translocase protein TatA.